The sequence spans 354 residues: S-adenosylmethionine:tRNA ribosyltransferase-isomerase (354 aa).

This sequence belongs to the QueA family. As to quaternary structure, monomer.

It localises to the cytoplasm. The enzyme catalyses 7-aminomethyl-7-carbaguanosine(34) in tRNA + S-adenosyl-L-methionine = epoxyqueuosine(34) in tRNA + adenine + L-methionine + 2 H(+). It functions in the pathway tRNA modification; tRNA-queuosine biosynthesis. In terms of biological role, transfers and isomerizes the ribose moiety from AdoMet to the 7-aminomethyl group of 7-deazaguanine (preQ1-tRNA) to give epoxyqueuosine (oQ-tRNA). In Salmonella gallinarum (strain 287/91 / NCTC 13346), this protein is S-adenosylmethionine:tRNA ribosyltransferase-isomerase.